A 275-amino-acid polypeptide reads, in one-letter code: NAD kinase (275 aa).

Asp66 serves as the catalytic Proton acceptor. NAD(+)-binding positions include 66-67 (DG), His71, 135-136 (NE), Lys146, Arg163, Asp165, and 176-181 (TAYAMS).

It belongs to the NAD kinase family. It depends on a divalent metal cation as a cofactor.

It localises to the cytoplasm. It carries out the reaction NAD(+) + ATP = ADP + NADP(+) + H(+). Its function is as follows. Involved in the regulation of the intracellular balance of NAD and NADP, and is a key enzyme in the biosynthesis of NADP. Catalyzes specifically the phosphorylation on 2'-hydroxyl of the adenosine moiety of NAD to yield NADP. This is NAD kinase from Methanosphaera stadtmanae (strain ATCC 43021 / DSM 3091 / JCM 11832 / MCB-3).